The sequence spans 941 residues: Isoleucine--tRNA ligase (941 aa).

The 'HIGH' region signature appears at 69–79 (PYANGDIHIGH). L-isoleucyl-5'-AMP is bound at residue Glu589. The 'KMSKS' region motif lies at 630-634 (KMSKS). Residue Lys633 coordinates ATP. 4 residues coordinate Zn(2+): Cys915, Cys918, Cys932, and Cys935.

Belongs to the class-I aminoacyl-tRNA synthetase family. IleS type 1 subfamily. As to quaternary structure, monomer. Zn(2+) is required as a cofactor.

Its subcellular location is the cytoplasm. The enzyme catalyses tRNA(Ile) + L-isoleucine + ATP = L-isoleucyl-tRNA(Ile) + AMP + diphosphate. Its function is as follows. Catalyzes the attachment of isoleucine to tRNA(Ile). As IleRS can inadvertently accommodate and process structurally similar amino acids such as valine, to avoid such errors it has two additional distinct tRNA(Ile)-dependent editing activities. One activity is designated as 'pretransfer' editing and involves the hydrolysis of activated Val-AMP. The other activity is designated 'posttransfer' editing and involves deacylation of mischarged Val-tRNA(Ile). This Zymomonas mobilis subsp. mobilis (strain ATCC 31821 / ZM4 / CP4) protein is Isoleucine--tRNA ligase.